Consider the following 311-residue polypeptide: Acetyl-coenzyme A carboxylase carboxyl transferase subunit beta (311 aa).

The CoA carboxyltransferase N-terminal domain occupies 27-296; sequence LWTKCGHCSA…AEAADAPEAG (270 aa). Positions 31, 34, 50, and 53 each coordinate Zn(2+). A C4-type zinc finger spans residues 31 to 53; sequence CGHCSAVLYRPELERNQEVCPKC. Positions 286–299 are enriched in low complexity; the sequence is AAEAADAPEAGEQP. The segment at 286 to 311 is disordered; sequence AAEAADAPEAGEQPSEATDPVGEHWD.

Belongs to the AccD/PCCB family. As to quaternary structure, acetyl-CoA carboxylase is a heterohexamer composed of biotin carboxyl carrier protein (AccB), biotin carboxylase (AccC) and two subunits each of ACCase subunit alpha (AccA) and ACCase subunit beta (AccD). Zn(2+) serves as cofactor.

It localises to the cytoplasm. It catalyses the reaction N(6)-carboxybiotinyl-L-lysyl-[protein] + acetyl-CoA = N(6)-biotinyl-L-lysyl-[protein] + malonyl-CoA. Its pathway is lipid metabolism; malonyl-CoA biosynthesis; malonyl-CoA from acetyl-CoA: step 1/1. Component of the acetyl coenzyme A carboxylase (ACC) complex. Biotin carboxylase (BC) catalyzes the carboxylation of biotin on its carrier protein (BCCP) and then the CO(2) group is transferred by the transcarboxylase to acetyl-CoA to form malonyl-CoA. In Alkalilimnicola ehrlichii (strain ATCC BAA-1101 / DSM 17681 / MLHE-1), this protein is Acetyl-coenzyme A carboxylase carboxyl transferase subunit beta.